The following is an 833-amino-acid chain: CUB domain-containing protein 1 (833 aa).

Positions 1–29 (MAHSACGFSVALLGALLLGTARLLRGTEA) are cleaved as a signal peptide. At 30–666 (SEIALPQRSG…VTLTPRTVDL (637 aa)) the chain is on the extracellular side. Asparagine 122, asparagine 180, asparagine 205, asparagine 270, asparagine 310, asparagine 342, and asparagine 386 each carry an N-linked (GlcNAc...) asparagine glycan. Positions 417 to 540 (CLDHRYCYRQ…QGLIVSYTPY (124 aa)) constitute a CUB domain. A disulfide bridge links cysteine 476 with cysteine 499. Residues 667-687 (AVVIGAAGGGALLLFALVLII) form a helical membrane-spanning segment. The Cytoplasmic portion of the chain corresponds to 688–833 (CFVKKKKKVD…HTQGPVETEE (146 aa)). Tyrosine 731 carries the phosphotyrosine modification. Residues 783-833 (AKFTAEELAPSSPPESESEPYTFSHPNKGEIGVRETDIPLLHTQGPVETEE) form a disordered region. The segment covering 809-819 (NKGEIGVRETD) has biased composition (basic and acidic residues).

As to quaternary structure, interacts with CDH2/N-cadherin, CDH3/P-cadherin, SDC1/syndecan-1, SDC4/syndecan-4 and the serine protease ST14/MT-SP1. Also interacts SRC and PRKCG/protein kinase C gamma. Phosphorylated on tyrosine by kinases of the SRC family such as SRC and YES as well as by the protein kinase C gamma/PRKCG. Dephosphorylated by phosphotyrosine phosphatases. Also phosphorylated by suramin, a heparin analog. Tyrosine phosphorylated in response to dissociation of integrin alpha-6 beta-4 from laminin-5. In terms of processing, N-glycosylated. Post-translationally, a soluble form may also be produced by proteolytic cleavage at the cell surface (shedding). Another peptide of 80 kDa (p80) is present in cultured keratinocytes probably due to tryptic cleavage at an unidentified site on the N-terminal side. Converted to p80 by plasmin, a trypsin-like protease.

Its subcellular location is the cell membrane. In terms of biological role, may be involved in cell adhesion and cell matrix association. May play a role in the regulation of anchorage versus migration or proliferation versus differentiation via its phosphorylation. May be a novel marker for leukemia diagnosis and for immature hematopoietic stem cell subsets. Belongs to the tetraspanin web involved in tumor progression and metastasis. The protein is CUB domain-containing protein 1 (Cdcp1) of Mus musculus (Mouse).